The chain runs to 389 residues: Brix domain-containing protein C1B9.03c (389 aa).

One can recognise a Brix domain in the interval 28-309 (SMVIRSGASE…LIKITEDAMG (282 aa)). Basic and acidic residues predominate over residues 323 to 350 (EEIKQQDNFHEQSRALKEKRKKEQDENV). The tract at residues 323–389 (EEIKQQDNFH…EGSSAYSDTE (67 aa)) is disordered. The span at 351–362 (RRKRENKKRRKD) shows a compositional bias: basic residues. Ser377 bears the Phosphoserine mark. Over residues 379-389 (NEGSSAYSDTE) the composition is skewed to polar residues.

The polypeptide is Brix domain-containing protein C1B9.03c (Schizosaccharomyces pombe (strain 972 / ATCC 24843) (Fission yeast)).